Consider the following 357-residue polypeptide: Type II methyltransferase M1.HgaI (357 aa).

Residues 5–357 (IMGLSLFSSA…NITREIFNEN (353 aa)) enclose the SAM-dependent MTase C5-type domain. Cys83 is an active-site residue.

This sequence belongs to the class I-like SAM-binding methyltransferase superfamily. C5-methyltransferase family.

It carries out the reaction a 2'-deoxycytidine in DNA + S-adenosyl-L-methionine = a 5-methyl-2'-deoxycytidine in DNA + S-adenosyl-L-homocysteine + H(+). A methylase that recognizes DNA with the sequence 5'-GCGTC-3', methylates C-2, and protects the DNA from cleavage by the HgaI endonuclease. The chain is Type II methyltransferase M1.HgaI (hgaIAM) from Avibacterium volantium (Pasteurella volantium).